The chain runs to 1073 residues: Probable lipase MIL1 (1073 aa).

Disordered regions lie at residues 1–151 (MSDS…AVSS) and 163–190 (LTSK…KSVN). Basic and acidic residues-rich tracts occupy residues 54–81 (QAKE…EAGK) and 101–121 (GIDR…HDTD). Residues 143–147 (WQEMP) carry the APM2-interacting WQEMP motif motif. Residues Asn190, Asn229, and Asn236 are each glycosylated (N-linked (GlcNAc...) asparagine). Residues 230–267 (SSQTSVNLTSSPSTTSLNNEKNNDDDDDDSYDEYEDDV) form a disordered region. Positions 233-249 (TSVNLTSSPSTTSLNNE) are enriched in low complexity. A compositionally biased stretch (acidic residues) spans 252-267 (NDDDDDDSYDEYEDDV). An N-linked (GlcNAc...) asparagine glycan is attached at Asn280. A helical membrane pass occupies residues 292–312 (FAYVGAINILANQMCTNLATL). Residues 385–448 (NPWENDRDHE…SDVPGKVLDP (64 aa)) form a disordered region. A compositionally biased stretch (polar residues) spans 404–427 (RMSPNEQNGSVQASTPDPEQSATP). Asn411 carries N-linked (GlcNAc...) asparagine glycosylation. Residue Ser435 is modified to Phosphoserine. A helical transmembrane segment spans residues 457 to 477 (LNIDVAWTIICDLFLICLQSS). The N-linked (GlcNAc...) asparagine glycan is linked to Asn495. Helical transmembrane passes span 553 to 573 (LVLG…IAAG) and 577 to 597 (IGIT…VVAV). A glycan (N-linked (GlcNAc...) asparagine) is linked at Asn726. A helical membrane pass occupies residues 818 to 838 (WFLAYLFRAAAGGFSAVMGIS). Asn850 carries N-linked (GlcNAc...) asparagine glycosylation. Disordered regions lie at residues 942–968 (GRDM…EGIA) and 1010–1073 (KEVE…PDDI). Residues 1027-1037 (PSTPKINPPQS) show a composition bias toward pro residues. Ser1037 is modified (phosphoserine).

It belongs to the TMCO4 family. In terms of assembly, interacts with RPP0. Interacts with APM2.

It localises to the golgi apparatus membrane. Its subcellular location is the early endosome membrane. The protein resides in the cytoplasmic vesicle. It is found in the clathrin-coated vesicle membrane. In terms of biological role, probable lipase that recruits the AP-1-related (AP-1R) complex to membranes via interaction with APM2. The AP-1R complex is an adapter protein complex that mediates of cargo protein SNC1 sorting in clathrin-coated vesicles. In Saccharomyces cerevisiae (strain ATCC 204508 / S288c) (Baker's yeast), this protein is Probable lipase MIL1.